We begin with the raw amino-acid sequence, 228 residues long: MGQKVHPTGIRLGIVKEHTSVWYADGATYADYLLKDLQTREYLQDKLKSASVSRIDIHRPAQTARITIHTARPGIVIGKKGEDVEKLRQDLTKQMGVPVHINIEEIRKPELDAMLVAQSVAQQLERRVMFRRAMKRAVQNAMRIGAKGIKIQVSGRLGGAEIARTEWYREGRVPLHTLRADIDYNTYEAHTTYGVIGVKVWIFKGEVIGGRQEELKPQAPAPRKKAAK.

The KH type-2 domain maps to 39–107; sequence TREYLQDKLK…PVHINIEEIR (69 aa).

It belongs to the universal ribosomal protein uS3 family. Part of the 30S ribosomal subunit. Forms a tight complex with proteins S10 and S14.

In terms of biological role, binds the lower part of the 30S subunit head. Binds mRNA in the 70S ribosome, positioning it for translation. The protein is Small ribosomal subunit protein uS3 of Pseudomonas entomophila (strain L48).